The sequence spans 83 residues: Cytochrome c5 (83 aa).

The heme c site is built by cysteine 15, cysteine 18, histidine 19, and methionine 59. The cysteines at positions 65 and 68 are disulfide-linked.

This sequence belongs to the cytochrome c family. In terms of assembly, homodimer. Post-translationally, binds 1 heme c group covalently per subunit.

Functionally, it is unreactive with cytochrome c reductase or oxidase. The sequence is that of Cytochrome c5 from Azotobacter vinelandii.